Reading from the N-terminus, the 352-residue chain is Ion-translocating oxidoreductase complex subunit D (352 aa).

Transmembrane regions (helical) follow at residues 20–40 (IMLL…WFFG), 44–64 (LFQI…VLSL), 78–109 (ALLT…IIIA), and 123–143 (PAMI…TSWL). T187 carries the post-translational modification FMN phosphoryl threonine. 5 consecutive transmembrane segments (helical) span residues 214-234 (VLAG…GVFL), 242-262 (WHIP…GWLF), 267-287 (LASP…FFIL), 301-321 (LIFG…GGYP), and 322-342 (DGVA…DYYT).

The protein belongs to the NqrB/RnfD family. The complex is composed of six subunits: RsxA, RsxB, RsxC, RsxD, RsxE and RsxG. Requires FMN as cofactor.

The protein resides in the cell inner membrane. Part of a membrane-bound complex that couples electron transfer with translocation of ions across the membrane. Required to maintain the reduced state of SoxR. The polypeptide is Ion-translocating oxidoreductase complex subunit D (Salmonella arizonae (strain ATCC BAA-731 / CDC346-86 / RSK2980)).